The primary structure comprises 487 residues: Protein nucleotidyltransferase YdiU (487 aa).

8 residues coordinate ATP: glycine 90, glycine 92, arginine 93, lysine 113, aspartate 125, glycine 126, arginine 176, and arginine 183. Aspartate 252 serves as the catalytic Proton acceptor. Mg(2+)-binding residues include asparagine 253 and aspartate 262. Aspartate 262 provides a ligand contact to ATP.

It belongs to the SELO family. The cofactor is Mg(2+). Requires Mn(2+) as cofactor.

The enzyme catalyses L-seryl-[protein] + ATP = 3-O-(5'-adenylyl)-L-seryl-[protein] + diphosphate. It catalyses the reaction L-threonyl-[protein] + ATP = 3-O-(5'-adenylyl)-L-threonyl-[protein] + diphosphate. It carries out the reaction L-tyrosyl-[protein] + ATP = O-(5'-adenylyl)-L-tyrosyl-[protein] + diphosphate. The catalysed reaction is L-histidyl-[protein] + UTP = N(tele)-(5'-uridylyl)-L-histidyl-[protein] + diphosphate. The enzyme catalyses L-seryl-[protein] + UTP = O-(5'-uridylyl)-L-seryl-[protein] + diphosphate. It catalyses the reaction L-tyrosyl-[protein] + UTP = O-(5'-uridylyl)-L-tyrosyl-[protein] + diphosphate. Its function is as follows. Nucleotidyltransferase involved in the post-translational modification of proteins. It can catalyze the addition of adenosine monophosphate (AMP) or uridine monophosphate (UMP) to a protein, resulting in modifications known as AMPylation and UMPylation. In Pseudomonas fluorescens (strain SBW25), this protein is Protein nucleotidyltransferase YdiU.